Here is a 339-residue protein sequence, read N- to C-terminus: DNA-directed RNA polymerase subunit alpha (339 aa).

Positions 1–235 (MVLQKNWQSL…DQLQLFINFD (235 aa)) are alpha N-terminal domain (alpha-NTD). Positions 251-339 (FNRNLLRKVD…DLAKRLDETF (89 aa)) are alpha C-terminal domain (alpha-CTD).

This sequence belongs to the RNA polymerase alpha chain family. Homodimer. The RNAP catalytic core consists of 2 alpha, 1 beta, 1 beta' and 1 omega subunit. When a sigma factor is associated with the core the holoenzyme is formed, which can initiate transcription.

The enzyme catalyses RNA(n) + a ribonucleoside 5'-triphosphate = RNA(n+1) + diphosphate. In terms of biological role, DNA-dependent RNA polymerase catalyzes the transcription of DNA into RNA using the four ribonucleoside triphosphates as substrates. The sequence is that of DNA-directed RNA polymerase subunit alpha from Gluconobacter oxydans (strain 621H) (Gluconobacter suboxydans).